A 206-amino-acid chain; its full sequence is Holliday junction branch migration complex subunit RuvA (206 aa).

The domain I stretch occupies residues 1–64 (MIGRLRGNLL…EDAQLLYGFN (64 aa)). The segment at 65-143 (TKKERALFRE…GWGAGDLFTP (79 aa)) is domain II. The tract at residues 144–157 (ADTTSMDDASDLIS) is flexible linker. The interval 158 to 206 (SPQSAQDEAVSALISLGYKPVQASKMVSQVAKPDMTSESLIRESLKSMI) is domain III.

The protein belongs to the RuvA family. Homotetramer. Forms an RuvA(8)-RuvB(12)-Holliday junction (HJ) complex. HJ DNA is sandwiched between 2 RuvA tetramers; dsDNA enters through RuvA and exits via RuvB. An RuvB hexamer assembles on each DNA strand where it exits the tetramer. Each RuvB hexamer is contacted by two RuvA subunits (via domain III) on 2 adjacent RuvB subunits; this complex drives branch migration. In the full resolvosome a probable DNA-RuvA(4)-RuvB(12)-RuvC(2) complex forms which resolves the HJ.

It is found in the cytoplasm. Functionally, the RuvA-RuvB-RuvC complex processes Holliday junction (HJ) DNA during genetic recombination and DNA repair, while the RuvA-RuvB complex plays an important role in the rescue of blocked DNA replication forks via replication fork reversal (RFR). RuvA specifically binds to HJ cruciform DNA, conferring on it an open structure. The RuvB hexamer acts as an ATP-dependent pump, pulling dsDNA into and through the RuvAB complex. HJ branch migration allows RuvC to scan DNA until it finds its consensus sequence, where it cleaves and resolves the cruciform DNA. This is Holliday junction branch migration complex subunit RuvA from Aliivibrio salmonicida (strain LFI1238) (Vibrio salmonicida (strain LFI1238)).